The chain runs to 153 residues: Nuclear cap-binding protein subunit 2 (153 aa).

MRNA contacts are provided by residues Y17, Y40, 109–113 (RTDWD), 120–124 (RQYGR), and 130–131 (QV). Positions 37–115 (CTLYVGNLSF…RIVRTDWDAG (79 aa)) constitute an RRM domain.

Belongs to the RRM NCBP2 family. As to quaternary structure, component of the nuclear cap-binding complex (CBC), a heterodimer composed of ncbp1/cbp80 and ncbp2/cbp20 that interacts with m7GpppG-capped RNA.

The protein localises to the nucleus. The protein resides in the cytoplasm. Functionally, component of the cap-binding complex (CBC), which binds co-transcriptionally to the 5' cap of pre-mRNAs and is involved in various processes such as pre-mRNA splicing, translation regulation, nonsense-mediated mRNA decay, RNA-mediated gene silencing (RNAi) by microRNAs (miRNAs) and mRNA export. The CBC complex is involved in mRNA export from the nucleus, leading to the recruitment of the mRNA export machinery to the 5' end of mRNA and to mRNA export in a 5' to 3' direction through the nuclear pore. The CBC complex is also involved in mediating U snRNA and intronless mRNAs export from the nucleus. The CBC complex is essential for a pioneer round of mRNA translation, before steady state translation when the CBC complex is replaced by cytoplasmic cap-binding protein eIF4E. The pioneer round of mRNA translation mediated by the CBC complex plays a central role in nonsense-mediated mRNA decay (NMD), NMD only taking place in mRNAs bound to the CBC complex, but not on eIF4E-bound mRNAs. The CBC complex enhances NMD in mRNAs containing at least one exon-junction complex (EJC), promoting the interaction between upf1 and upf2. The CBC complex is also involved in 'failsafe' NMD, which is independent of the EJC complex, while it does not participate in Staufen-mediated mRNA decay (SMD). During cell proliferation, the CBC complex is also involved in microRNAs (miRNAs) biogenesis via its interaction with srrt/ars2, thereby being required for miRNA-mediated RNA interference. The CBC complex also acts as a negative regulator of parn, thereby acting as an inhibitor of mRNA deadenylation. In the CBC complex, ncbp2/cbp20 recognizes and binds capped RNAs (m7GpppG-capped RNA) but requires ncbp1/cbp80 to stabilize the movement of its N-terminal loop and lock the CBC into a high affinity cap-binding state with the cap structure. The conventional cap-binding complex with NCBP2 binds both small nuclear RNA (snRNA) and messenger (mRNA) and is involved in their export from the nucleus. The protein is Nuclear cap-binding protein subunit 2 (ncbp2) of Xenopus laevis (African clawed frog).